Here is a 563-residue protein sequence, read N- to C-terminus: Tripeptidyl-peptidase 1 (563 aa).

A signal peptide spans 1–19 (MRLRTCLLGLLALCVASKC). A propeptide spans 20-195 (SYSPEPDQQR…PEPQVSGTVG (176 aa)) (removed in mature form). Cys-111 and Cys-122 form a disulfide bridge. One can recognise a Peptidase S53 domain in the interval 199-563 (GVTPSVIRQR…PALLKALIKP (365 aa)). 2 N-linked (GlcNAc...) asparagine glycosylation sites follow: Asn-210 and Asn-222. Active-site charge relay system residues include Glu-272 and Asp-276. Residues Asn-286, Asn-313, and Asn-443 are each glycosylated (N-linked (GlcNAc...) asparagine). 2 disulfides stabilise this stretch: Cys-365/Cys-526 and Cys-522/Cys-537. Ser-475 (charge relay system) is an active-site residue. Positions 517 and 518 each coordinate Ca(2+). 3 residues coordinate Ca(2+): Gly-539, Gly-541, and Asp-543.

Monomer. Interacts with CLN5. Interacts with CLN3. It depends on Ca(2+) as a cofactor. In terms of processing, activated by autocatalytic proteolytical processing upon acidification. N-glycosylation is required for processing and activity.

The protein localises to the lysosome. It localises to the melanosome. It carries out the reaction Release of an N-terminal tripeptide from a polypeptide, but also has endopeptidase activity.. Lysosomal serine protease with tripeptidyl-peptidase I activity. May act as a non-specific lysosomal peptidase which generates tripeptides from the breakdown products produced by lysosomal proteinases. Requires substrates with an unsubstituted N-terminus. The polypeptide is Tripeptidyl-peptidase 1 (TPP1) (Canis lupus familiaris (Dog)).